A 213-amino-acid chain; its full sequence is Viral dihydrofolate reductase (213 aa).

The DHFR domain maps to L4–K184. Residues A10 and G16–H22 each bind NADP(+). D31–Q36 is a substrate binding site. K54–T56 contributes to the NADP(+) binding site. R70 is a binding site for substrate. NADP(+) contacts are provided by residues S76–K78 and G116–D123.

This sequence belongs to the dihydrofolate reductase family.

The enzyme catalyses (6S)-5,6,7,8-tetrahydrofolate + NADP(+) = 7,8-dihydrofolate + NADPH + H(+). It functions in the pathway cofactor biosynthesis; tetrahydrofolate biosynthesis; 5,6,7,8-tetrahydrofolate from 7,8-dihydrofolate: step 1/1. Its function is as follows. Key enzyme in folate metabolism. Catalyzes an essential reaction for de novo glycine and purine synthesis, and for DNA precursor synthesis. The chain is Viral dihydrofolate reductase (DHFR) from Saimiri sciureus (Common squirrel monkey).